Consider the following 473-residue polypeptide: Siroheme synthase 2 (473 aa).

The tract at residues 1–204 (MDYFPIFCQL…NDHVQADQHV (204 aa)) is precorrin-2 dehydrogenase /sirohydrochlorin ferrochelatase. NAD(+) contacts are provided by residues 22-23 (EI) and 43-44 (CE). Phosphoserine is present on Ser-128. The interval 216–473 (GEVVLVGAGP…KVTECVAHVG (258 aa)) is uroporphyrinogen-III C-methyltransferase. Pro-225 contacts S-adenosyl-L-methionine. The Proton acceptor role is filled by Asp-248. Residue Lys-270 is the Proton donor of the active site. S-adenosyl-L-methionine-binding positions include 301–303 (GGD), Ile-306, 331–332 (TA), Met-382, and Gly-411.

It in the N-terminal section; belongs to the precorrin-2 dehydrogenase / sirohydrochlorin ferrochelatase family. In the C-terminal section; belongs to the precorrin methyltransferase family.

The enzyme catalyses uroporphyrinogen III + 2 S-adenosyl-L-methionine = precorrin-2 + 2 S-adenosyl-L-homocysteine + H(+). The catalysed reaction is precorrin-2 + NAD(+) = sirohydrochlorin + NADH + 2 H(+). It carries out the reaction siroheme + 2 H(+) = sirohydrochlorin + Fe(2+). It participates in cofactor biosynthesis; adenosylcobalamin biosynthesis; precorrin-2 from uroporphyrinogen III: step 1/1. It functions in the pathway cofactor biosynthesis; adenosylcobalamin biosynthesis; sirohydrochlorin from precorrin-2: step 1/1. The protein operates within porphyrin-containing compound metabolism; siroheme biosynthesis; precorrin-2 from uroporphyrinogen III: step 1/1. Its pathway is porphyrin-containing compound metabolism; siroheme biosynthesis; siroheme from sirohydrochlorin: step 1/1. It participates in porphyrin-containing compound metabolism; siroheme biosynthesis; sirohydrochlorin from precorrin-2: step 1/1. Multifunctional enzyme that catalyzes the SAM-dependent methylations of uroporphyrinogen III at position C-2 and C-7 to form precorrin-2 via precorrin-1. Then it catalyzes the NAD-dependent ring dehydrogenation of precorrin-2 to yield sirohydrochlorin. Finally, it catalyzes the ferrochelation of sirohydrochlorin to yield siroheme. The protein is Siroheme synthase 2 of Yersinia pseudotuberculosis serotype O:1b (strain IP 31758).